The sequence spans 426 residues: Histidine--tRNA ligase (426 aa).

The protein belongs to the class-II aminoacyl-tRNA synthetase family. Homodimer.

Its subcellular location is the cytoplasm. It catalyses the reaction tRNA(His) + L-histidine + ATP = L-histidyl-tRNA(His) + AMP + diphosphate + H(+). The polypeptide is Histidine--tRNA ligase (Streptococcus agalactiae serotype III (strain NEM316)).